The chain runs to 725 residues: G-quartet DNA-binding protein TGP1 (725 aa).

A Nuclear localization signal motif is present at residues 241-258; sequence KKALTDVLQIHEKKERVH. Disordered regions lie at residues 252–284 and 468–614; these read EKKE…LQET and EIHK…GKRG. Residues 256–277 show a composition bias toward basic residues; that stretch reads RVHKQQNKNKNPRNAHKNHNRQ. Positions 468-478 are enriched in basic and acidic residues; it reads EIHKIDRERKR. Residues 517–544 are compositionally biased toward low complexity; it reads NKYKNTSVQNNNNNKNQQRSQSQNQRPP. Over residues 545-564 the composition is skewed to basic and acidic residues; the sequence is RNYDNRQGGENRNNRQRNEN. The span at 565 to 593 shows a compositional bias: low complexity; the sequence is NRNNFNGNGHRVNNQNNQRNRNSSYPRNN.

Post-translationally, the N-terminus is blocked.

It localises to the nucleus. Its function is as follows. Binds specifically to parallel G4-DNA, a four-stranded structure stabilized by tetrads of hydrogen-bonded guanines. This Tetrahymena thermophila protein is G-quartet DNA-binding protein TGP1 (TGP1).